The sequence spans 289 residues: Cell division protein ZipA (289 aa).

Position 1 (methionine 1) is a topological domain, periplasmic. A helical transmembrane segment spans residues 2–22; sequence EIGLREWLIVIGIIVIAGILF. Residues 23 to 289 are Cytoplasmic-facing; sequence DGWRRMRGSK…ERRALTQRRG (267 aa). A disordered region spans residues 48-141; sequence DEEETTSAEV…KPAQRITEDK (94 aa). Basic and acidic residues-rich tracts occupy residues 64-77, 85-106, and 123-141; these read LDTH…EHDL, REGK…KDEP, and GRDD…TEDK.

The protein belongs to the ZipA family. As to quaternary structure, interacts with FtsZ via their C-terminal domains.

It localises to the cell inner membrane. Essential cell division protein that stabilizes the FtsZ protofilaments by cross-linking them and that serves as a cytoplasmic membrane anchor for the Z ring. Also required for the recruitment to the septal ring of downstream cell division proteins. This chain is Cell division protein ZipA, found in Pseudomonas savastanoi pv. phaseolicola (strain 1448A / Race 6) (Pseudomonas syringae pv. phaseolicola (strain 1448A / Race 6)).